The primary structure comprises 620 residues: UvrABC system protein C (620 aa).

The region spanning 13–92 is the GIY-YIG domain; the sequence is DKPGVYIMKN…IKKYSPRYNI (80 aa). One can recognise a UVR domain in the interval 204-239; that stretch reads TSIIKNLKLEMEKAAEELEFEKAAKIRDRILAIELI.

The protein belongs to the UvrC family. As to quaternary structure, interacts with UvrB in an incision complex.

The protein localises to the cytoplasm. The UvrABC repair system catalyzes the recognition and processing of DNA lesions. UvrC both incises the 5' and 3' sides of the lesion. The N-terminal half is responsible for the 3' incision and the C-terminal half is responsible for the 5' incision. This is UvrABC system protein C from Clostridium perfringens (strain SM101 / Type A).